The chain runs to 308 residues: Glycerol-3-phosphate dehydrogenase [NAD(P)+] (308 aa).

Residues Trp15, Arg35, Arg36, and Lys83 each contribute to the NADPH site. Lys83 and Gly111 together coordinate sn-glycerol 3-phosphate. An NADPH-binding site is contributed by Ser115. Sn-glycerol 3-phosphate contacts are provided by Lys166, Asp219, Ser229, Arg230, and Asn231. Catalysis depends on Lys166, which acts as the Proton acceptor. Arg230 is an NADPH binding site. Residue Glu256 coordinates NADPH.

Belongs to the NAD-dependent glycerol-3-phosphate dehydrogenase family.

It localises to the cytoplasm. The catalysed reaction is sn-glycerol 3-phosphate + NAD(+) = dihydroxyacetone phosphate + NADH + H(+). The enzyme catalyses sn-glycerol 3-phosphate + NADP(+) = dihydroxyacetone phosphate + NADPH + H(+). It participates in membrane lipid metabolism; glycerophospholipid metabolism. Catalyzes the reduction of the glycolytic intermediate dihydroxyacetone phosphate (DHAP) to sn-glycerol 3-phosphate (G3P), the key precursor for phospholipid synthesis. The polypeptide is Glycerol-3-phosphate dehydrogenase [NAD(P)+] (Synechococcus elongatus (strain ATCC 33912 / PCC 7942 / FACHB-805) (Anacystis nidulans R2)).